The sequence spans 133 residues: ATP synthase epsilon chain, chloroplastic (133 aa).

Belongs to the ATPase epsilon chain family. As to quaternary structure, F-type ATPases have 2 components, CF(1) - the catalytic core - and CF(0) - the membrane proton channel. CF(1) has five subunits: alpha(3), beta(3), gamma(1), delta(1), epsilon(1). CF(0) has three main subunits: a, b and c.

It is found in the plastid. The protein localises to the chloroplast thylakoid membrane. Produces ATP from ADP in the presence of a proton gradient across the membrane. The polypeptide is ATP synthase epsilon chain, chloroplastic (Nicotiana tomentosiformis (Tobacco)).